The following is a 128-amino-acid chain: Holo-[acyl-carrier-protein] synthase (128 aa).

2 residues coordinate Mg(2+): D8 and E57.

Belongs to the P-Pant transferase superfamily. AcpS family. Mg(2+) serves as cofactor.

It localises to the cytoplasm. It carries out the reaction apo-[ACP] + CoA = holo-[ACP] + adenosine 3',5'-bisphosphate + H(+). Transfers the 4'-phosphopantetheine moiety from coenzyme A to a Ser of acyl-carrier-protein. The sequence is that of Holo-[acyl-carrier-protein] synthase from Syntrophus aciditrophicus (strain SB).